A 202-amino-acid polypeptide reads, in one-letter code: ATP-dependent Clp protease proteolytic subunit (202 aa).

S101 functions as the Nucleophile in the catalytic mechanism. Residue H126 is part of the active site.

The protein belongs to the peptidase S14 family. As to quaternary structure, component of the chloroplastic Clp protease core complex.

It is found in the plastid. Its subcellular location is the chloroplast stroma. It catalyses the reaction Hydrolysis of proteins to small peptides in the presence of ATP and magnesium. alpha-casein is the usual test substrate. In the absence of ATP, only oligopeptides shorter than five residues are hydrolyzed (such as succinyl-Leu-Tyr-|-NHMec, and Leu-Tyr-Leu-|-Tyr-Trp, in which cleavage of the -Tyr-|-Leu- and -Tyr-|-Trp bonds also occurs).. In terms of biological role, cleaves peptides in various proteins in a process that requires ATP hydrolysis. Has a chymotrypsin-like activity. Plays a major role in the degradation of misfolded proteins. The polypeptide is ATP-dependent Clp protease proteolytic subunit (Acorus calamus (Sweet flag)).